Reading from the N-terminus, the 435-residue chain is Transcription factor tau 55 kDa subunit (435 aa).

The disordered stretch occupies residues 362 to 417; it reads GLLSPTEENETTNAGQSKGSSTANDPNIQIQEEDVGLPDSTNTSRDHTGDKEEVQS. S365 bears the Phosphoserine mark. The segment covering 372–391 has biased composition (polar residues); sequence TTNAGQSKGSSTANDPNIQI. The segment covering 405–417 has biased composition (basic and acidic residues); that stretch reads SRDHTGDKEEVQS.

Component of the TFIIIC complex composed of TFC1, TFC3, TFC4, TFC6, TFC7 and TFC8. The subunits are organized in two globular domains, tauA and tauB, connected by a proteolysis-sensitive and flexible linker.

It localises to the nucleus. TFIIIC mediates tRNA and 5S RNA gene activation by binding to intragenic promoter elements. Upstream of the transcription start site, TFIIIC assembles the initiation complex TFIIIB-TFIIIC-tDNA, which is sufficient for RNA polymerase III recruitment and function. Part of the tauA domain of TFIIIC that binds boxA DNA promoter sites of tRNA and similar genes. The protein is Transcription factor tau 55 kDa subunit (TFC7) of Saccharomyces cerevisiae (strain ATCC 204508 / S288c) (Baker's yeast).